Reading from the N-terminus, the 482-residue chain is Glutamyl-tRNA(Gln) amidotransferase subunit A (482 aa).

Catalysis depends on charge relay system residues Lys-75 and Ser-150. Ser-174 (acyl-ester intermediate) is an active-site residue.

This sequence belongs to the amidase family. GatA subfamily. In terms of assembly, heterotrimer of A, B and C subunits.

It carries out the reaction L-glutamyl-tRNA(Gln) + L-glutamine + ATP + H2O = L-glutaminyl-tRNA(Gln) + L-glutamate + ADP + phosphate + H(+). Allows the formation of correctly charged Gln-tRNA(Gln) through the transamidation of misacylated Glu-tRNA(Gln) in organisms which lack glutaminyl-tRNA synthetase. The reaction takes place in the presence of glutamine and ATP through an activated gamma-phospho-Glu-tRNA(Gln). This chain is Glutamyl-tRNA(Gln) amidotransferase subunit A, found in Acaryochloris marina (strain MBIC 11017).